A 503-amino-acid chain; its full sequence is Cytosol aminopeptidase (503 aa).

2 residues coordinate Mn(2+): Lys-269 and Asp-274. Residue Lys-281 is part of the active site. Asp-292, Asp-351, and Glu-353 together coordinate Mn(2+). Arg-355 is an active-site residue.

The protein belongs to the peptidase M17 family. Mn(2+) serves as cofactor.

It is found in the cytoplasm. It carries out the reaction Release of an N-terminal amino acid, Xaa-|-Yaa-, in which Xaa is preferably Leu, but may be other amino acids including Pro although not Arg or Lys, and Yaa may be Pro. Amino acid amides and methyl esters are also readily hydrolyzed, but rates on arylamides are exceedingly low.. The catalysed reaction is Release of an N-terminal amino acid, preferentially leucine, but not glutamic or aspartic acids.. In terms of biological role, presumably involved in the processing and regular turnover of intracellular proteins. Catalyzes the removal of unsubstituted N-terminal amino acids from various peptides. This chain is Cytosol aminopeptidase, found in Vibrio cholerae serotype O1 (strain ATCC 39541 / Classical Ogawa 395 / O395).